The primary structure comprises 517 residues: Probable protein phosphatase 2C 20 (517 aa).

Residues 1–59 (MWVMQGERRRARAPWGPPDTGGALLERWISRERRSDSRDASGSAKQRSAMGNSLPVESK) are disordered. Residues 28–39 (WISRERRSDSRD) show a composition bias toward basic and acidic residues. The PPM-type phosphatase domain maps to 70 to 373 (KYVVSSMQGW…DNTTVILVLF (304 aa)). Residues D105, G106, E323, and D364 each coordinate Mn(2+). The disordered stretch occupies residues 380–517 (AVPPVDTDTD…PPHDDTYHRW (138 aa)). Positions 402 to 414 (GSNNATASDNNDP) are enriched in polar residues. A compositionally biased stretch (low complexity) spans 438-455 (DATATAVGSSSTTAVAAD). A compositionally biased stretch (basic and acidic residues) spans 499 to 517 (LPRSNPDKSPPHDDTYHRW).

The protein belongs to the PP2C family. Mg(2+) is required as a cofactor. It depends on Mn(2+) as a cofactor.

The enzyme catalyses O-phospho-L-seryl-[protein] + H2O = L-seryl-[protein] + phosphate. It catalyses the reaction O-phospho-L-threonyl-[protein] + H2O = L-threonyl-[protein] + phosphate. The polypeptide is Probable protein phosphatase 2C 20 (Oryza sativa subsp. japonica (Rice)).